We begin with the raw amino-acid sequence, 551 residues long: MNLWQQNYDPAGNIWLSSLIASLPILFFFFALIKLKLKGYVAASWTVVIALAVALLFYKMPVDHALASVVYGFFYGLWPIAWIIIAAVFVYKISVKTGQFDIIRSSILSITPDQRLQMLIVGFCFGAFLEGAAGFGAPVAITAALLVGLGFNPLYAAGLCLIVNTAPVAFGAMGIPILVAGQVTGLDSFEIGQMVGRQLPFLTIIVLFWIMAIMDGWRGVKETWPAVMVAGGSFAIAQYLSSNFIGPELPDIISSLVSLVCLTLFLKRWQPVRIFRFGDMGASQVDQTLARTRYTTGQIVRAWSPFLFLTATVTLWSVPPFKALFAPGGALYDWVINVPVPYLDKLVARMPPVVHEATAYAAVYKFDWFSATGTAILFAALLSIVWLKMKPSAAIQTFGSTLKELALPIYSIGMVLAFAFISNYSGLSSTLALALAHTGSAFTFFSPFLGWLGVFLTGSDTSSNALFASLQATAAQQIGVSDVLMVAANTTGGVTGKMISPQSIAIACAAVGLVGKESDLFRFTVKHSLIFTCMVGVITTLQAYVLTWMIP.

The next 12 helical transmembrane spans lie at 13 to 33 (NIWL…FALI), 37 to 57 (LKGY…ALLF), 69 to 89 (VVYG…AAVF), 131 to 151 (GAAG…GLGF), 159 to 179 (LCLI…PILV), 194 to 214 (MVGR…MAIM), 244 to 264 (FIGP…CLTL), 306 to 326 (FLFL…ALFA), 366 to 386 (FDWF…SIVW), 405 to 425 (LALP…SNYS), 438 to 458 (TGSA…FLTG), and 530 to 550 (IFTC…TWMI).

This sequence belongs to the lactate permease family.

It is found in the cell inner membrane. The catalysed reaction is (S)-lactate(in) + H(+)(in) = (S)-lactate(out) + H(+)(out). It catalyses the reaction (R)-lactate(in) + H(+)(in) = (R)-lactate(out) + H(+)(out). It carries out the reaction glycolate(in) + H(+)(in) = glycolate(out) + H(+)(out). In terms of biological role, uptake of L-lactate across the membrane. Can also transport D-lactate and glycolate. Seems to be driven by a proton motive force. The protein is L-lactate permease (lldP) of Salmonella typhimurium (strain LT2 / SGSC1412 / ATCC 700720).